The chain runs to 681 residues: Proline dehydrogenase 1, mitochondrial (681 aa).

Residues 1-30 constitute a mitochondrion transit peptide; that stretch reads MALLRSLSAQRTAISLVYGRNSSKSSNSVA. The segment covering 76–87 has biased composition (polar residues); sequence STLVQPEVVSSE. 2 disordered regions span residues 76–113 and 216–239; these read STLVQPEVVSSETVKRSMKQESSQEKNPSPAGSPQRDP and EEAEKREVESSVSSAGDKKEEGSM. Residues 88–99 show a composition bias toward basic and acidic residues; the sequence is TVKRSMKQESSQ.

Belongs to the proline oxidase family. Requires FAD as cofactor. As to expression, most abundant in developing nervous system.

The protein resides in the mitochondrion matrix. It catalyses the reaction L-proline + a quinone = (S)-1-pyrroline-5-carboxylate + a quinol + H(+). Its pathway is amino-acid degradation; L-proline degradation into L-glutamate; L-glutamate from L-proline: step 1/2. Its function is as follows. Converts proline to delta-1-pyrroline-5-carboxylate. Involved in the conversion of proline to glutamate, which functions as a transmitter at neuromuscular junctions. Glutamate deficiency could possibly account for reduced motor activity. The sequence is that of Proline dehydrogenase 1, mitochondrial (slgA) from Drosophila melanogaster (Fruit fly).